The chain runs to 297 residues: Ribonuclease H2 subunit A (297 aa).

Positions 21–248 (PCVLGIDEAG…ASTIVEKRCV (228 aa)) constitute an RNase H type-2 domain. Residues D27, E28, and D138 each coordinate a divalent metal cation.

Belongs to the RNase HII family. Eukaryotic subfamily. The cofactor is Mn(2+). Requires Mg(2+) as cofactor.

The catalysed reaction is Endonucleolytic cleavage to 5'-phosphomonoester.. In terms of biological role, catalytic subunit of RNase HII, an endonuclease that specifically degrades the RNA of RNA:DNA hybrids. Participates in DNA replication, possibly by mediating the removal of lagging-strand Okazaki fragment RNA primers during DNA replication. Mediates the excision of single ribonucleotides from DNA:RNA duplexes. In Caenorhabditis elegans, this protein is Ribonuclease H2 subunit A (rnh-2).